A 252-amino-acid chain; its full sequence is Ubiquinone biosynthesis O-methyltransferase (252 aa).

R51, G70, D91, and M136 together coordinate S-adenosyl-L-methionine.

It belongs to the methyltransferase superfamily. UbiG/COQ3 family.

It catalyses the reaction a 3-demethylubiquinol + S-adenosyl-L-methionine = a ubiquinol + S-adenosyl-L-homocysteine + H(+). The catalysed reaction is a 3-(all-trans-polyprenyl)benzene-1,2-diol + S-adenosyl-L-methionine = a 2-methoxy-6-(all-trans-polyprenyl)phenol + S-adenosyl-L-homocysteine + H(+). It participates in cofactor biosynthesis; ubiquinone biosynthesis. Functionally, O-methyltransferase that catalyzes the 2 O-methylation steps in the ubiquinone biosynthetic pathway. This Albidiferax ferrireducens (strain ATCC BAA-621 / DSM 15236 / T118) (Rhodoferax ferrireducens) protein is Ubiquinone biosynthesis O-methyltransferase.